The chain runs to 432 residues: 3-phosphoshikimate 1-carboxyvinyltransferase (432 aa).

The 3-phosphoshikimate site is built by K23, S24, and R28. Position 23 (K23) interacts with phosphoenolpyruvate. Residues G95 and R123 each contribute to the phosphoenolpyruvate site. The 3-phosphoshikimate site is built by S166, Q168, D315, and K342. Q168 is a binding site for phosphoenolpyruvate. D315 acts as the Proton acceptor in catalysis. Phosphoenolpyruvate-binding residues include R346 and R390.

Belongs to the EPSP synthase family. Monomer.

The protein resides in the cytoplasm. The enzyme catalyses 3-phosphoshikimate + phosphoenolpyruvate = 5-O-(1-carboxyvinyl)-3-phosphoshikimate + phosphate. The protein operates within metabolic intermediate biosynthesis; chorismate biosynthesis; chorismate from D-erythrose 4-phosphate and phosphoenolpyruvate: step 6/7. Functionally, catalyzes the transfer of the enolpyruvyl moiety of phosphoenolpyruvate (PEP) to the 5-hydroxyl of shikimate-3-phosphate (S3P) to produce enolpyruvyl shikimate-3-phosphate and inorganic phosphate. The protein is 3-phosphoshikimate 1-carboxyvinyltransferase of Lactiplantibacillus plantarum (strain ATCC BAA-793 / NCIMB 8826 / WCFS1) (Lactobacillus plantarum).